A 250-amino-acid chain; its full sequence is Hydroxyethylthiazole kinase (250 aa).

M39 lines the substrate pocket. R114 and T159 together coordinate ATP. G186 provides a ligand contact to substrate.

It belongs to the Thz kinase family. Mg(2+) serves as cofactor.

It catalyses the reaction 5-(2-hydroxyethyl)-4-methylthiazole + ATP = 4-methyl-5-(2-phosphooxyethyl)-thiazole + ADP + H(+). It participates in cofactor biosynthesis; thiamine diphosphate biosynthesis; 4-methyl-5-(2-phosphoethyl)-thiazole from 5-(2-hydroxyethyl)-4-methylthiazole: step 1/1. Its function is as follows. Catalyzes the phosphorylation of the hydroxyl group of 4-methyl-5-beta-hydroxyethylthiazole (THZ). In Lactococcus lactis subsp. lactis (strain IL1403) (Streptococcus lactis), this protein is Hydroxyethylthiazole kinase.